The chain runs to 102 residues: NADH-quinone oxidoreductase subunit K (102 aa).

A run of 3 helical transmembrane segments spans residues 6-26 (LEHG…GLMV), 30-50 (ILFV…AFVV), and 62-82 (VMFI…LAIL).

It belongs to the complex I subunit 4L family. As to quaternary structure, NDH-1 is composed of 13 different subunits. Subunits NuoA, H, J, K, L, M, N constitute the membrane sector of the complex.

It localises to the cell inner membrane. It carries out the reaction a quinone + NADH + 5 H(+)(in) = a quinol + NAD(+) + 4 H(+)(out). Functionally, NDH-1 shuttles electrons from NADH, via FMN and iron-sulfur (Fe-S) centers, to quinones in the respiratory chain. The immediate electron acceptor for the enzyme in this species is believed to be ubiquinone. Couples the redox reaction to proton translocation (for every two electrons transferred, four hydrogen ions are translocated across the cytoplasmic membrane), and thus conserves the redox energy in a proton gradient. This is NADH-quinone oxidoreductase subunit K from Pseudomonas putida (strain ATCC 700007 / DSM 6899 / JCM 31910 / BCRC 17059 / LMG 24140 / F1).